A 64-amino-acid polypeptide reads, in one-letter code: Small ribosomal subunit protein bS21 (64 aa).

Residues 40–64 (PPSVKRKIKSQEAQRRMRRTKRKRF) are disordered. A compositionally biased stretch (basic residues) spans 55–64 (RMRRTKRKRF).

Belongs to the bacterial ribosomal protein bS21 family.

This Elusimicrobium minutum (strain Pei191) protein is Small ribosomal subunit protein bS21.